We begin with the raw amino-acid sequence, 504 residues long: Glutamate--tRNA ligase (504 aa).

The short motif at 27 to 37 (PSPTGTPHVGL) is the 'HIGH' region element. The 'KMSKS' region signature appears at 271-275 (KLSKR). Lysine 274 contributes to the ATP binding site.

This sequence belongs to the class-I aminoacyl-tRNA synthetase family. Glutamate--tRNA ligase type 1 subfamily. Monomer.

The protein localises to the cytoplasm. The enzyme catalyses tRNA(Glu) + L-glutamate + ATP = L-glutamyl-tRNA(Glu) + AMP + diphosphate. Its function is as follows. Catalyzes the attachment of glutamate to tRNA(Glu) in a two-step reaction: glutamate is first activated by ATP to form Glu-AMP and then transferred to the acceptor end of tRNA(Glu). The polypeptide is Glutamate--tRNA ligase (Arthrobacter sp. (strain FB24)).